The sequence spans 229 residues: Coiled-coil domain-containing protein 134 (229 aa).

The first 22 residues, 1–22, serve as a signal peptide directing secretion; sequence MDPVQLLSFLLALLLPLGTALD. Positions 192–218 form a coiled coil; sequence NTDAFQKALREEEKRRRKEEKRKEIRK. Positions 201–229 are disordered; the sequence is REEEKRRRKEEKRKEIRKGPRITRSRSEL. The segment covering 219-229 has biased composition (basic residues); sequence GPRITRSRSEL. Positions 226–229 match the Prevents secretion from ER motif; that stretch reads RSEL.

It belongs to the CCDC134 family.

It is found in the endoplasmic reticulum lumen. Functionally, molecular adapter required to prevent protein hyperglycosylation of HSP90B1: during translation, associates with nascent HSP90B1 and the STT3A catalytic component of the OST-A complex and tethers them to a specialized translocon that forms a microenvironment for HSP90B1 folding. In the CCDC134-containing translocon, STT3A associates with the SRT pseudosubstrate motif of HSP90B1, preventing access to facultative glycosylation sites until folding is completed, preventing hyperglycosylation and subsequent degradation of HSP90B1. This Xenopus tropicalis (Western clawed frog) protein is Coiled-coil domain-containing protein 134 (ccdc134).